Consider the following 457-residue polypeptide: L-lysine-epsilon aminotransferase (457 aa).

Gly-131 and Ala-132 together coordinate pyridoxal 5'-phosphate. 2-oxoglutarate is bound by residues Arg-172 and Gln-278. Arg-172 serves as a coordination point for L-lysine. Gln-278 contributes to the pyridoxal 5'-phosphate binding site. An N6-(pyridoxal phosphate)lysine modification is found at Lys-304. Arg-427 lines the 2-oxoglutarate pocket.

Belongs to the class-III pyridoxal-phosphate-dependent aminotransferase family. Monomer. It depends on pyridoxal 5'-phosphate as a cofactor.

It catalyses the reaction L-lysine + 2-oxoglutarate = (S)-2-amino-6-oxohexanoate + L-glutamate. The protein operates within antibiotic biosynthesis; cephamycin C biosynthesis. With respect to regulation, activity is induced in the presence of high concentrations of lysine, but not by L-alpha-aminoadipic acid. Not repressed by ammonium ions. Catalyzes the transfer of the terminal amino group of L-lysine to alpha-ketoglutarate to yield L-glutamate and 2-aminoadipate 6-semialdehyde ((S)-2-amino-6-oxohexanoate), which is spontaneously converted to the dehydrated form 1-piperideine 6-carboxylate. Shows a high specificity for L-lysine as substrate although L-ornithine can also be used, leading to the formation of an o-aminobenzaldehyde reactive compound. Only cis-oxaloacetate and pyruvate can replace alpha-ketoglutarate, but with very low efficiency. The protein is L-lysine-epsilon aminotransferase of Streptomyces clavuligerus.